The primary structure comprises 503 residues: ATP synthase subunit alpha (503 aa).

169–176 (GDRSTGKT) provides a ligand contact to ATP.

It belongs to the ATPase alpha/beta chains family. As to quaternary structure, F-type ATPases have 2 components, CF(1) - the catalytic core - and CF(0) - the membrane proton channel. CF(1) has five subunits: alpha(3), beta(3), gamma(1), delta(1), epsilon(1). CF(0) has three main subunits: a(1), b(2) and c(9-12). The alpha and beta chains form an alternating ring which encloses part of the gamma chain. CF(1) is attached to CF(0) by a central stalk formed by the gamma and epsilon chains, while a peripheral stalk is formed by the delta and b chains.

It is found in the cell membrane. It carries out the reaction ATP + H2O + 4 H(+)(in) = ADP + phosphate + 5 H(+)(out). Its function is as follows. Produces ATP from ADP in the presence of a proton gradient across the membrane. The alpha chain is a regulatory subunit. The chain is ATP synthase subunit alpha from Dehalococcoides mccartyi (strain ATCC BAA-2100 / JCM 16839 / KCTC 5957 / BAV1).